Here is a 354-residue protein sequence, read N- to C-terminus: UDP-N-acetylglucosamine--N-acetylmuramyl-(pentapeptide) pyrophosphoryl-undecaprenol N-acetylglucosamine transferase 3 (354 aa).

UDP-N-acetyl-alpha-D-glucosamine contacts are provided by residues 12 to 14, Arg-163, Ser-193, and Gln-287; that span reads TAG.

This sequence belongs to the glycosyltransferase 28 family. MurG subfamily.

It is found in the cell membrane. It carries out the reaction di-trans,octa-cis-undecaprenyl diphospho-N-acetyl-alpha-D-muramoyl-L-alanyl-D-glutamyl-meso-2,6-diaminopimeloyl-D-alanyl-D-alanine + UDP-N-acetyl-alpha-D-glucosamine = di-trans,octa-cis-undecaprenyl diphospho-[N-acetyl-alpha-D-glucosaminyl-(1-&gt;4)]-N-acetyl-alpha-D-muramoyl-L-alanyl-D-glutamyl-meso-2,6-diaminopimeloyl-D-alanyl-D-alanine + UDP + H(+). Its pathway is cell wall biogenesis; peptidoglycan biosynthesis. In terms of biological role, cell wall formation. Catalyzes the transfer of a GlcNAc subunit on undecaprenyl-pyrophosphoryl-MurNAc-pentapeptide (lipid intermediate I) to form undecaprenyl-pyrophosphoryl-MurNAc-(pentapeptide)GlcNAc (lipid intermediate II). The sequence is that of UDP-N-acetylglucosamine--N-acetylmuramyl-(pentapeptide) pyrophosphoryl-undecaprenol N-acetylglucosamine transferase 3 from Bacillus cereus (strain ATCC 14579 / DSM 31 / CCUG 7414 / JCM 2152 / NBRC 15305 / NCIMB 9373 / NCTC 2599 / NRRL B-3711).